Here is a 360-residue protein sequence, read N- to C-terminus: Phospho-N-acetylmuramoyl-pentapeptide-transferase (360 aa).

10 helical membrane passes run Arg25 to Ile45, Met74 to Ala94, Tyr97 to Tyr117, Trp132 to Ala152, Ile168 to Ser188, Gly199 to Ser219, Ser236 to Phe256, Val263 to Ile283, Val288 to Val308, and Val338 to Lys358.

This sequence belongs to the glycosyltransferase 4 family. MraY subfamily. Mg(2+) serves as cofactor.

It is found in the cell inner membrane. The catalysed reaction is UDP-N-acetyl-alpha-D-muramoyl-L-alanyl-gamma-D-glutamyl-meso-2,6-diaminopimeloyl-D-alanyl-D-alanine + di-trans,octa-cis-undecaprenyl phosphate = di-trans,octa-cis-undecaprenyl diphospho-N-acetyl-alpha-D-muramoyl-L-alanyl-D-glutamyl-meso-2,6-diaminopimeloyl-D-alanyl-D-alanine + UMP. It functions in the pathway cell wall biogenesis; peptidoglycan biosynthesis. Its function is as follows. Catalyzes the initial step of the lipid cycle reactions in the biosynthesis of the cell wall peptidoglycan: transfers peptidoglycan precursor phospho-MurNAc-pentapeptide from UDP-MurNAc-pentapeptide onto the lipid carrier undecaprenyl phosphate, yielding undecaprenyl-pyrophosphoryl-MurNAc-pentapeptide, known as lipid I. In Stutzerimonas stutzeri (strain A1501) (Pseudomonas stutzeri), this protein is Phospho-N-acetylmuramoyl-pentapeptide-transferase.